The chain runs to 539 residues: Chaperonin GroEL (539 aa).

Residues 30–33 (TLGP), K51, 87–91 (DGTTT), G415, 479–481 (NAA), and D495 contribute to the ATP site.

The protein belongs to the chaperonin (HSP60) family. Forms a cylinder of 14 subunits composed of two heptameric rings stacked back-to-back. Interacts with the co-chaperonin GroES.

It is found in the cytoplasm. The catalysed reaction is ATP + H2O + a folded polypeptide = ADP + phosphate + an unfolded polypeptide.. In terms of biological role, together with its co-chaperonin GroES, plays an essential role in assisting protein folding. The GroEL-GroES system forms a nano-cage that allows encapsulation of the non-native substrate proteins and provides a physical environment optimized to promote and accelerate protein folding. The protein is Chaperonin GroEL of Kluyvera intermedia (Enterobacter intermedius).